The primary structure comprises 486 residues: Glutamyl-tRNA(Gln) amidotransferase subunit A (486 aa).

Active-site charge relay system residues include lysine 74 and serine 149. Serine 173 acts as the Acyl-ester intermediate in catalysis.

Belongs to the amidase family. GatA subfamily. Heterotrimer of A, B and C subunits.

It carries out the reaction L-glutamyl-tRNA(Gln) + L-glutamine + ATP + H2O = L-glutaminyl-tRNA(Gln) + L-glutamate + ADP + phosphate + H(+). Its function is as follows. Allows the formation of correctly charged Gln-tRNA(Gln) through the transamidation of misacylated Glu-tRNA(Gln) in organisms which lack glutaminyl-tRNA synthetase. The reaction takes place in the presence of glutamine and ATP through an activated gamma-phospho-Glu-tRNA(Gln). The chain is Glutamyl-tRNA(Gln) amidotransferase subunit A from Prochlorococcus marinus (strain SARG / CCMP1375 / SS120).